The sequence spans 874 residues: Alanine--tRNA ligase (874 aa).

Positions 564, 568, 665, and 669 each coordinate Zn(2+).

Belongs to the class-II aminoacyl-tRNA synthetase family. Zn(2+) is required as a cofactor.

The protein localises to the cytoplasm. It catalyses the reaction tRNA(Ala) + L-alanine + ATP = L-alanyl-tRNA(Ala) + AMP + diphosphate. In terms of biological role, catalyzes the attachment of alanine to tRNA(Ala) in a two-step reaction: alanine is first activated by ATP to form Ala-AMP and then transferred to the acceptor end of tRNA(Ala). Also edits incorrectly charged Ser-tRNA(Ala) and Gly-tRNA(Ala) via its editing domain. The chain is Alanine--tRNA ligase from Paraburkholderia phymatum (strain DSM 17167 / CIP 108236 / LMG 21445 / STM815) (Burkholderia phymatum).